Reading from the N-terminus, the 156-residue chain is Small ribosomal subunit protein bS16 (156 aa).

2 stretches are compositionally biased toward low complexity: residues 113–123 (AESGTTAAATT) and 137–156 (EAPA…ASES). Residues 113–156 (AESGTTAAATTPKKKKAPKKDEAAEAPAEAAEAPAEAADAASES) are disordered.

The protein belongs to the bacterial ribosomal protein bS16 family.

The protein is Small ribosomal subunit protein bS16 of Mycolicibacterium smegmatis (strain ATCC 700084 / mc(2)155) (Mycobacterium smegmatis).